The sequence spans 431 residues: Protein translocase subunit SecY 1 (431 aa).

Helical transmembrane passes span 18-38 (IYFT…TVPG), 67-87 (YSIF…IQLL), 115-135 (YLTL…FNAL), 150-170 (VEIA…GDEI), 178-198 (GVSV…LYQI), 215-235 (ILFF…VTWV), 268-288 (VIPV…LMAF), 312-332 (GVII…FVQV), 365-385 (LIKL…LPQL), and 392-412 (LPSS…VVLE).

It belongs to the SecY/SEC61-alpha family. As to quaternary structure, component of the Sec protein translocase complex. Heterotrimer consisting of SecY, SecE and SecG subunits. The heterotrimers can form oligomers, although 1 heterotrimer is thought to be able to translocate proteins. Interacts with the ribosome. Interacts with SecDF, and other proteins may be involved. Interacts with SecA.

Its subcellular location is the cell membrane. Its function is as follows. The central subunit of the protein translocation channel SecYEG. Consists of two halves formed by TMs 1-5 and 6-10. These two domains form a lateral gate at the front which open onto the bilayer between TMs 2 and 7, and are clamped together by SecE at the back. The channel is closed by both a pore ring composed of hydrophobic SecY resides and a short helix (helix 2A) on the extracellular side of the membrane which forms a plug. The plug probably moves laterally to allow the channel to open. The ring and the pore may move independently. This chain is Protein translocase subunit SecY 1, found in Lactobacillus kefiranofaciens subsp. kefiranofaciens.